We begin with the raw amino-acid sequence, 143 residues long: uncharacterized protein (143 aa).

The interval 1 to 143 (MRSSRQKASI…WFSQTVKRKA (143 aa)) is disordered. 2 stretches are compositionally biased toward basic and acidic residues: residues 34-46 (ISAE…KHLD) and 61-76 (EYQK…RKIV). Acidic residues-rich tracts occupy residues 77-93 (DDEE…PEEE) and 103-115 (YEEE…PDLA).

This is an uncharacterized protein from Bacillus subtilis (strain 168).